A 136-amino-acid chain; its full sequence is UPF0216 protein PH0358 (136 aa).

Belongs to the UPF0216 family.

The sequence is that of UPF0216 protein PH0358 from Pyrococcus horikoshii (strain ATCC 700860 / DSM 12428 / JCM 9974 / NBRC 100139 / OT-3).